The chain runs to 392 residues: Protein-glutamate methylesterase/protein-glutamine glutaminase (392 aa).

The region spanning 9–126 is the Response regulatory domain; the sequence is TVLIVDDSPF…GADIQALARD (118 aa). Asp-60 is modified (4-aspartylphosphate). The interval 148-194 is disordered; it reads VSRISSASGSRPPWTAGAASENTNRLSSPGSTSSTLGSAKGRSLDSG. Residues 173 to 185 show a composition bias toward low complexity; the sequence is LSSPGSTSSTLGS. The CheB-type methylesterase domain maps to 198–392; it reads PKYPVEIVAI…RHIVECVQRR (195 aa). Catalysis depends on residues Ser-210, His-237, and Asp-334.

The protein belongs to the CheB family. Post-translationally, phosphorylated by CheA. Phosphorylation of the N-terminal regulatory domain activates the methylesterase activity.

The protein localises to the cytoplasm. It catalyses the reaction [protein]-L-glutamate 5-O-methyl ester + H2O = L-glutamyl-[protein] + methanol + H(+). The catalysed reaction is L-glutaminyl-[protein] + H2O = L-glutamyl-[protein] + NH4(+). In terms of biological role, involved in chemotaxis. Part of a chemotaxis signal transduction system that modulates chemotaxis in response to various stimuli. Catalyzes the demethylation of specific methylglutamate residues introduced into the chemoreceptors (methyl-accepting chemotaxis proteins or MCP) by CheR. Also mediates the irreversible deamidation of specific glutamine residues to glutamic acid. The chain is Protein-glutamate methylesterase/protein-glutamine glutaminase from Desulfitobacterium hafniense (strain Y51).